Consider the following 125-residue polypeptide: RutC family protein aq_364 (125 aa).

Belongs to the RutC family.

The protein is RutC family protein aq_364 of Aquifex aeolicus (strain VF5).